Here is a 258-residue protein sequence, read N- to C-terminus: Pimeloyl-[acyl-carrier protein] methyl ester esterase (258 aa).

Residues 17 to 241 (VYLIHGWGAN…KAAHAPFLSH (225 aa)) form the AB hydrolase-1 domain. Residues Trp-23, 83–84 (SL), and 145–149 (FLQLQ) contribute to the substrate site. Ser-83 serves as the catalytic Nucleophile. Active-site residues include Asp-207 and His-235. Residue His-235 participates in substrate binding.

This sequence belongs to the AB hydrolase superfamily. Carboxylesterase BioH family. Monomer.

It is found in the cytoplasm. It catalyses the reaction 6-carboxyhexanoyl-[ACP] methyl ester + H2O = 6-carboxyhexanoyl-[ACP] + methanol + H(+). It functions in the pathway cofactor biosynthesis; biotin biosynthesis. Its function is as follows. The physiological role of BioH is to remove the methyl group introduced by BioC when the pimeloyl moiety is complete. It allows to synthesize pimeloyl-ACP via the fatty acid synthetic pathway through the hydrolysis of the ester bonds of pimeloyl-ACP esters. The sequence is that of Pimeloyl-[acyl-carrier protein] methyl ester esterase from Neisseria meningitidis serogroup B (strain ATCC BAA-335 / MC58).